The chain runs to 506 residues: Pentatricopeptide repeat-containing protein At5g18475 (506 aa).

A disordered region spans residues 28–48 (SEKKKKPSPPPESSISPVETN). 12 PPR repeats span residues 88–122 (NNAT…TCRF), 123–158 (QESL…RVKP), 159–194 (SLNA…GLQP), 195–229 (NTCI…GISY), 231–266 (NSIT…GISP), 267–301 (DPVT…GCNP), 302–336 (NVYN…GLKL), 337–371 (DTVG…RCRA), 372–406 (DTLT…GVHL), 407–441 (NKGS…GIWP), 442–476 (HHAT…GLIP), and 477–506 (GPKS…SLVS).

This sequence belongs to the PPR family. P subfamily.

The sequence is that of Pentatricopeptide repeat-containing protein At5g18475 from Arabidopsis thaliana (Mouse-ear cress).